We begin with the raw amino-acid sequence, 271 residues long: Formamidopyrimidine-DNA glycosylase (271 aa).

Pro2 (schiff-base intermediate with DNA) is an active-site residue. Catalysis depends on Glu3, which acts as the Proton donor. The active-site Proton donor; for beta-elimination activity is the Lys58. Positions 90, 108, and 151 each coordinate DNA. Residues 236-271 (QVYGRDGQPCHRDDGGTIRRFAQGGRSTWYCPRCQR) form an FPG-type; degenerate zinc finger. The active-site Proton donor; for delta-elimination activity is Arg261.

Belongs to the FPG family. Monomer. It depends on Zn(2+) as a cofactor.

It carries out the reaction Hydrolysis of DNA containing ring-opened 7-methylguanine residues, releasing 2,6-diamino-4-hydroxy-5-(N-methyl)formamidopyrimidine.. The catalysed reaction is 2'-deoxyribonucleotide-(2'-deoxyribose 5'-phosphate)-2'-deoxyribonucleotide-DNA = a 3'-end 2'-deoxyribonucleotide-(2,3-dehydro-2,3-deoxyribose 5'-phosphate)-DNA + a 5'-end 5'-phospho-2'-deoxyribonucleoside-DNA + H(+). Involved in base excision repair of DNA damaged by oxidation or by mutagenic agents. Acts as a DNA glycosylase that recognizes and removes damaged bases. Has a preference for oxidized purines, such as 7,8-dihydro-8-oxoguanine (8-oxoG). Has AP (apurinic/apyrimidinic) lyase activity and introduces nicks in the DNA strand. Cleaves the DNA backbone by beta-delta elimination to generate a single-strand break at the site of the removed base with both 3'- and 5'-phosphates. This Erythrobacter litoralis (strain HTCC2594) protein is Formamidopyrimidine-DNA glycosylase.